The chain runs to 278 residues: HCLS1-associated protein X-1 (278 aa).

Position 2 is an N-acetylserine (Ser-2). Positions 2–43 (SVFDLFRGFFGFPGPRSHRDPFFGGMTRDDDDDEDDEEEEDS) are required for localization in mitochondria. 2 disordered regions span residues 15-50 (GPRS…GRES) and 99-262 (LPSH…ALDD). Positions 30 to 43 (DDDDDEDDEEEEDS) are enriched in acidic residues. Positions 113 to 278 (TPGVRLREGQ…LLLGRWFRSR (166 aa)) are involved in HCLS1 binding. Basic and acidic residues predominate over residues 132–152 (PDSHQPRIFEGVLESHAKPES). Positions 174–205 (VSPHSRAREDKDLDSQVSQEGLGPLLQPQPKS) are involved in CASP9 binding. The segment at 175-246 (SPHSRAREDK…TTVTHQEAHD (72 aa)) is involved in GNA13 binding. The segment at 182–278 (EDKDLDSQVS…LLLGRWFRSR (97 aa)) is required for localization in sarcoplasmic reticulum. The segment at 183–278 (DKDLDSQVSQ…LLLGRWFRSR (96 aa)) is involved in PKD2 binding. Ser-188 and Ser-191 each carry phosphoserine. The interval 202–224 (QPKSYFKSISVTKITKPDGTVEE) is involved in PLN binding. The tract at residues 202–244 (QPKSYFKSISVTKITKPDGTVEEHRTVVDSEGRRETTVTHQEA) is involved in ATP2A2 binding. A mediates interaction with UCP3 region spans residues 209–278 (SISVTKITKP…LLLGRWFRSR (70 aa)). Residues 216–254 (TKPDGTVEEHRTVVDSEGRRETTVTHQEAHDSSRSDPDP) are compositionally biased toward basic and acidic residues. Residues 269 to 278 (LLLGRWFRSR) form a required for ITGB6 binding region.

The protein belongs to the HAX1 family. In terms of assembly, interacts with ABCB1, ABCB4 and ABCB11. Directly associates with HCLS1/HS1, through binding to its N-terminal region. Interacts with CTTN. Interacts with PKD2. Interacts with GNA13. Interacts with CASP9. Interacts with ITGB6. Interacts with PLN and ATP2A2; these interactions are inhibited by calcium. Interacts with GRB7. Interacts (via C-terminus) with XIAP/BIRC4 (via BIR 2 domain and BIR 3 domain) and this interaction blocks ubiquitination of XIAP/BIRC4. Interacts with TPC2. Interacts with KCNC3. Interacts with XPO1. Interacts with RNF217. Interacts with UCP3; the interaction is direct and calcium-dependent. Interacts with MAPRE2; this interaction regulates cell migration in keratinocytes. As to expression, present in striated muscles (at protein level).

It is found in the mitochondrion matrix. It localises to the endoplasmic reticulum. The protein localises to the nucleus membrane. Its subcellular location is the cytoplasmic vesicle. The protein resides in the cytoplasm. It is found in the cell cortex. It localises to the cell membrane. The protein localises to the sarcoplasmic reticulum. Its subcellular location is the P-body. The protein resides in the nucleus. Recruits the Arp2/3 complex to the cell cortex and regulates reorganization of the cortical actin cytoskeleton via its interaction with KCNC3 and the Arp2/3 complex. Slows down the rate of inactivation of KCNC3 channels. Promotes GNA13-mediated cell migration. Involved in the clathrin-mediated endocytosis pathway. May be involved in internalization of ABC transporters such as ABCB11. May inhibit CASP9 and CASP3. Promotes cell survival. May regulate intracellular calcium pools. This is HCLS1-associated protein X-1 (Hax1) from Rattus norvegicus (Rat).